A 188-amino-acid chain; its full sequence is Segregation and condensation protein B (188 aa).

This sequence belongs to the ScpB family. In terms of assembly, homodimer. Homodimerization may be required to stabilize the binding of ScpA to the Smc head domains. Component of a cohesin-like complex composed of ScpA, ScpB and the Smc homodimer, in which ScpA and ScpB bind to the head domain of Smc. The presence of the three proteins is required for the association of the complex with DNA.

It is found in the cytoplasm. Functionally, participates in chromosomal partition during cell division. May act via the formation of a condensin-like complex containing Smc and ScpA that pull DNA away from mid-cell into both cell halves. The sequence is that of Segregation and condensation protein B from Lactococcus lactis subsp. cremoris (strain MG1363).